Reading from the N-terminus, the 498-residue chain is Glutamyl-tRNA(Gln) amidotransferase subunit A (498 aa).

Catalysis depends on charge relay system residues lysine 80 and serine 155. Residues 132-159 form a disordered region; it reads SSTENSAYGPTRNPWDTDRVPGGSSGGS. Catalysis depends on serine 179, which acts as the Acyl-ester intermediate.

This sequence belongs to the amidase family. GatA subfamily. Heterotrimer of A, B and C subunits.

The catalysed reaction is L-glutamyl-tRNA(Gln) + L-glutamine + ATP + H2O = L-glutaminyl-tRNA(Gln) + L-glutamate + ADP + phosphate + H(+). Allows the formation of correctly charged Gln-tRNA(Gln) through the transamidation of misacylated Glu-tRNA(Gln) in organisms which lack glutaminyl-tRNA synthetase. The reaction takes place in the presence of glutamine and ATP through an activated gamma-phospho-Glu-tRNA(Gln). In Thermobifida fusca (strain YX), this protein is Glutamyl-tRNA(Gln) amidotransferase subunit A.